Reading from the N-terminus, the 317-residue chain is Probable arabinan endo-1,5-alpha-L-arabinosidase C (317 aa).

Residues 1–17 (MLSFLAALSLPLALVNA) form the signal peptide. Catalysis depends on D32, which acts as the Proton acceptor. N-linked (GlcNAc...) asparagine glycosylation occurs at N190. The Proton donor role is filled by E198.

Belongs to the glycosyl hydrolase 43 family.

The protein localises to the secreted. The enzyme catalyses Endohydrolysis of (1-&gt;5)-alpha-arabinofuranosidic linkages in (1-&gt;5)-arabinans.. It participates in glycan metabolism; L-arabinan degradation. In terms of biological role, endo-1,5-alpha-L-arabinanase involved in degradation of pectin. Its preferred substrate is linear 1,5-alpha-L-arabinan. The polypeptide is Probable arabinan endo-1,5-alpha-L-arabinosidase C (abnC) (Aspergillus flavus (strain ATCC 200026 / FGSC A1120 / IAM 13836 / NRRL 3357 / JCM 12722 / SRRC 167)).